The primary structure comprises 280 residues: Aspartate/glutamate leucyltransferase (280 aa).

The protein belongs to the R-transferase family. Bpt subfamily.

Its subcellular location is the cytoplasm. It catalyses the reaction N-terminal L-glutamyl-[protein] + L-leucyl-tRNA(Leu) = N-terminal L-leucyl-L-glutamyl-[protein] + tRNA(Leu) + H(+). It carries out the reaction N-terminal L-aspartyl-[protein] + L-leucyl-tRNA(Leu) = N-terminal L-leucyl-L-aspartyl-[protein] + tRNA(Leu) + H(+). Functions in the N-end rule pathway of protein degradation where it conjugates Leu from its aminoacyl-tRNA to the N-termini of proteins containing an N-terminal aspartate or glutamate. This chain is Aspartate/glutamate leucyltransferase, found in Cereibacter sphaeroides (strain ATCC 17023 / DSM 158 / JCM 6121 / CCUG 31486 / LMG 2827 / NBRC 12203 / NCIMB 8253 / ATH 2.4.1.) (Rhodobacter sphaeroides).